The chain runs to 415 residues: Glutamyl-tRNA reductase (415 aa).

Substrate is bound by residues 49–52, S104, 109–111, and Q115; these read TCNR and EPQ. Residue C50 is the Nucleophile of the active site. An NADP(+)-binding site is contributed by 184–189; the sequence is GAGEMI.

It belongs to the glutamyl-tRNA reductase family. Homodimer.

The enzyme catalyses (S)-4-amino-5-oxopentanoate + tRNA(Glu) + NADP(+) = L-glutamyl-tRNA(Glu) + NADPH + H(+). It functions in the pathway porphyrin-containing compound metabolism; protoporphyrin-IX biosynthesis; 5-aminolevulinate from L-glutamyl-tRNA(Glu): step 1/2. Functionally, catalyzes the NADPH-dependent reduction of glutamyl-tRNA(Glu) to glutamate 1-semialdehyde (GSA). The polypeptide is Glutamyl-tRNA reductase (Neisseria meningitidis serogroup C / serotype 2a (strain ATCC 700532 / DSM 15464 / FAM18)).